Reading from the N-terminus, the 165-residue chain is Large ribosomal subunit protein uL10 (165 aa).

It belongs to the universal ribosomal protein uL10 family. Part of the ribosomal stalk of the 50S ribosomal subunit. The N-terminus interacts with L11 and the large rRNA to form the base of the stalk. The C-terminus forms an elongated spine to which L12 dimers bind in a sequential fashion forming a multimeric L10(L12)X complex.

Forms part of the ribosomal stalk, playing a central role in the interaction of the ribosome with GTP-bound translation factors. This Burkholderia cenocepacia (strain HI2424) protein is Large ribosomal subunit protein uL10.